Here is a 184-residue protein sequence, read N- to C-terminus: Peptidyl-tRNA hydrolase (184 aa).

Y17 contributes to the tRNA binding site. H22 functions as the Proton acceptor in the catalytic mechanism. Positions 71, 73, and 119 each coordinate tRNA.

It belongs to the PTH family. Monomer.

The protein localises to the cytoplasm. It carries out the reaction an N-acyl-L-alpha-aminoacyl-tRNA + H2O = an N-acyl-L-amino acid + a tRNA + H(+). In terms of biological role, hydrolyzes ribosome-free peptidyl-tRNAs (with 1 or more amino acids incorporated), which drop off the ribosome during protein synthesis, or as a result of ribosome stalling. Functionally, catalyzes the release of premature peptidyl moieties from peptidyl-tRNA molecules trapped in stalled 50S ribosomal subunits, and thus maintains levels of free tRNAs and 50S ribosomes. The polypeptide is Peptidyl-tRNA hydrolase (Corynebacterium diphtheriae (strain ATCC 700971 / NCTC 13129 / Biotype gravis)).